The sequence spans 421 residues: Peptide chain release factor subunit 1 (421 aa).

This sequence belongs to the eukaryotic release factor 1 family. Heterodimer of two subunits, one of which binds GTP.

The protein localises to the cytoplasm. Directs the termination of nascent peptide synthesis (translation) in response to the termination codons UAA, UAG and UGA. This chain is Peptide chain release factor subunit 1 (prf1), found in Methanocaldococcus jannaschii (strain ATCC 43067 / DSM 2661 / JAL-1 / JCM 10045 / NBRC 100440) (Methanococcus jannaschii).